The chain runs to 102 residues: Small ribosomal subunit protein uS10 (102 aa).

Belongs to the universal ribosomal protein uS10 family. In terms of assembly, part of the 30S ribosomal subunit.

In terms of biological role, involved in the binding of tRNA to the ribosomes. This chain is Small ribosomal subunit protein uS10, found in Rhizobium etli (strain CIAT 652).